The following is a 101-amino-acid chain: Apolipoprotein C-II (101 aa).

The first 22 residues, 1-22, serve as a signal peptide directing secretion; it reads MGTRFLLALCLVLLVLGFEVQG. Residues 66-74 are lipid binding; it reads AVDEKLRDL. Positions 78–101 are lipoprotein lipase cofactor; sequence STAAMSTYTGIFTDQVLSVLKGEE.

It belongs to the apolipoprotein C2 family. Post-translationally, proapolipoprotein C-II is synthesized as a sialic acid containing glycoprotein which is subsequently desialylated prior to its proteolytic processing. In terms of processing, proapolipoprotein C-II, the major form found in plasma undergoes proteolytic cleavage of its N-terminal hexapeptide to generate apolipoprotein C-II, which occurs as the minor form in plasma.

It is found in the secreted. Functionally, component of chylomicrons, very low-density lipoproteins (VLDL), low-density lipoproteins (LDL), and high-density lipoproteins (HDL) in plasma. Plays an important role in lipoprotein metabolism as an activator of lipoprotein lipase. Both proapolipoprotein C-II and apolipoprotein C-II can activate lipoprotein lipase. This is Apolipoprotein C-II (APOC2) from Macaca fascicularis (Crab-eating macaque).